A 238-amino-acid chain; its full sequence is Polynucleotide 3'-phosphatase (238 aa).

It belongs to the DNA 3' phosphatase family.

It localises to the nucleus. The catalysed reaction is a 3'end (2'-deoxyribonucleotide 3'-phosphate)-DNA + H2O = a 3'-end 2'-deoxyribonucleotide-DNA + phosphate. In terms of biological role, dephosphorylate DNA's 3'-phosphate termini. Has a role in the repair of breaks in single-stranded DNA. The polypeptide is Polynucleotide 3'-phosphatase (TPP1) (Saccharomyces cerevisiae (strain ATCC 204508 / S288c) (Baker's yeast)).